A 190-amino-acid chain; its full sequence is Molybdenum cofactor guanylyltransferase (190 aa).

Residues 8–10 (LAG), Lys20, Asp64, and Asp98 each bind GTP. Asp98 is a binding site for Mg(2+).

The protein belongs to the MobA family. As to quaternary structure, monomer. It depends on Mg(2+) as a cofactor.

It localises to the cytoplasm. It catalyses the reaction Mo-molybdopterin + GTP + H(+) = Mo-molybdopterin guanine dinucleotide + diphosphate. In terms of biological role, transfers a GMP moiety from GTP to Mo-molybdopterin (Mo-MPT) cofactor (Moco or molybdenum cofactor) to form Mo-molybdopterin guanine dinucleotide (Mo-MGD) cofactor. The polypeptide is Molybdenum cofactor guanylyltransferase (Rhodobacter capsulatus (Rhodopseudomonas capsulata)).